Reading from the N-terminus, the 228-residue chain is Flavin-dependent thymidylate synthase (228 aa).

Residues 1-217 (MEYKILDKGF…PWTFEAFLKF (217 aa)) form the ThyX domain. FAD is bound by residues threonine 55, 78–80 (RHR), and glutamate 86. DUMP is bound by residues 75-78 (QWFR), 86-90 (EASLR), and arginine 156. Residues 78 to 88 (RHRIGSFNEAS) carry the ThyX motif motif. FAD is bound by residues 172–174 (NAR) and asparagine 178. Residue arginine 183 participates in dUMP binding. The active-site Involved in ionization of N3 of dUMP, leading to its activation is the arginine 183.

Belongs to the thymidylate synthase ThyX family. Homotetramer. FAD is required as a cofactor.

It carries out the reaction dUMP + (6R)-5,10-methylene-5,6,7,8-tetrahydrofolate + NADPH + H(+) = dTMP + (6S)-5,6,7,8-tetrahydrofolate + NADP(+). It participates in pyrimidine metabolism; dTTP biosynthesis. Functionally, catalyzes the reductive methylation of 2'-deoxyuridine-5'-monophosphate (dUMP) to 2'-deoxythymidine-5'-monophosphate (dTMP) while utilizing 5,10-methylenetetrahydrofolate (mTHF) as the methyl donor, and NADPH and FADH(2) as the reductant. This Thermosipho africanus (strain TCF52B) protein is Flavin-dependent thymidylate synthase.